Reading from the N-terminus, the 523-residue chain is Cytochrome b5 reductase 4 (523 aa).

Residues 54-130 form the Cytochrome b5 heme-binding domain; it reads LIDVTEEELA…LKECLIGRMA (77 aa). Heme contacts are provided by histidine 89 and histidine 112. Positions 167-258 constitute a CS domain; the sequence is ESHPWYDWFQ…KEPVSWKSLG (92 aa). The FAD-binding FR-type domain occupies 275 to 387; the sequence is LYYRKCRLAS…SNPQGTFSSF (113 aa). FAD contacts are provided by residues 367–382 and 394–426; these read ENLT…NPQG and DVFL…KAKL.

It belongs to the flavoprotein pyridine nucleotide cytochrome reductase family. Requires FAD as cofactor.

It localises to the endoplasmic reticulum. It catalyses the reaction 2 Fe(III)-[cytochrome b5] + NADH = 2 Fe(II)-[cytochrome b5] + NAD(+) + H(+). NADH-cytochrome b5 reductase involved in endoplasmic reticulum stress response pathway. The polypeptide is Cytochrome b5 reductase 4 (cyb5r4) (Xenopus tropicalis (Western clawed frog)).